Reading from the N-terminus, the 181-residue chain is Large ribosomal subunit protein uL5 (181 aa).

Belongs to the universal ribosomal protein uL5 family. Part of the 50S ribosomal subunit; part of the 5S rRNA/L5/L18/L25 subcomplex. Contacts the 5S rRNA and the P site tRNA. Forms a bridge to the 30S subunit in the 70S ribosome.

This is one of the proteins that bind and probably mediate the attachment of the 5S RNA into the large ribosomal subunit, where it forms part of the central protuberance. In the 70S ribosome it contacts protein S13 of the 30S subunit (bridge B1b), connecting the 2 subunits; this bridge is implicated in subunit movement. Contacts the P site tRNA; the 5S rRNA and some of its associated proteins might help stabilize positioning of ribosome-bound tRNAs. The protein is Large ribosomal subunit protein uL5 of Helicobacter pylori (strain J99 / ATCC 700824) (Campylobacter pylori J99).